The primary structure comprises 304 residues: Glutaminase (304 aa).

The substrate site is built by Ser61, Asn113, Glu158, Asn165, Tyr189, Tyr240, and Val258.

The protein belongs to the glutaminase family. In terms of assembly, homotetramer.

It carries out the reaction L-glutamine + H2O = L-glutamate + NH4(+). This is Glutaminase from Fusobacterium nucleatum subsp. nucleatum (strain ATCC 25586 / DSM 15643 / BCRC 10681 / CIP 101130 / JCM 8532 / KCTC 2640 / LMG 13131 / VPI 4355).